A 307-amino-acid polypeptide reads, in one-letter code: Protein pid-3 (307 aa).

In terms of assembly, component of the pid-1 variant of the PETISCO complex (also called the pid-3, erh-2, tofu-6, and ife-3 small RNA complex) containing at least pid-1, tofu-6, ife-3, pid-3, and erh-2, which is required for the biogenesis of a class of 21 nucleotide PIWI-interacting RNAs (piRNAs) that possess a uracil residue at the 5'-end (also called 21U-RNAs). Within the complex interacts with pid-1; the interaction is direct. Component of the tost-1 variant of the PETISCO complex (also called the pid-3, erh-2, tofu-6, and ife-3 small RNA complex) containing at least tost-1, tofu-6, ife-3, pid-3, and erh-2, which plays an essential role in embryogenesis. Within the complex interacts with tost-1. Within the pid-1 and tost-1 variants of the PETISCO complexes interacts with tofu-6 (via the RRM domain) and erh-2. In contrast to the pid-1 variant of the PETISCO complex, the tost-1 variant of the PETISCO complex plays a minor role in the biogenesis of 21U-RNAs. Expressed in the germline (at protein level).

Its subcellular location is the cytoplasm. It localises to the perinuclear region. The protein localises to the nucleus. In terms of biological role, component of the pid-1 and tost-1 variants of the PETISCO complexes, which have roles in the biogenesis of a class of 21 nucleotide PIWI-interacting RNAs (piRNAs) that possess a uracil residue at the 5'-end (also called 21U-RNAs) and embryogenesis, respectively. Within the pid-1 variant of the PETISCO complex may stabilize 21U-RNA precursor molecules. Promotes the biogenesis of 21U-RNAs. Required for chromosome segregation and cell division in early embryos. The protein is Protein pid-3 of Caenorhabditis elegans.